A 601-amino-acid chain; its full sequence is Aspartate--tRNA ligase (601 aa).

Glu183 serves as a coordination point for L-aspartate. Residues 207–210 (QIFK) form an aspartate region. Arg229 lines the L-aspartate pocket. ATP is bound by residues 229 to 231 (RDE) and Gln238. His457 contributes to the L-aspartate binding site. Glu497 is an ATP binding site. Arg504 contacts L-aspartate. 549–552 (GIDR) is an ATP binding site.

Belongs to the class-II aminoacyl-tRNA synthetase family. Type 1 subfamily. In terms of assembly, homodimer.

It localises to the cytoplasm. It carries out the reaction tRNA(Asp) + L-aspartate + ATP = L-aspartyl-tRNA(Asp) + AMP + diphosphate. Catalyzes the attachment of L-aspartate to tRNA(Asp) in a two-step reaction: L-aspartate is first activated by ATP to form Asp-AMP and then transferred to the acceptor end of tRNA(Asp). The sequence is that of Aspartate--tRNA ligase from Leptospira interrogans serogroup Icterohaemorrhagiae serovar copenhageni (strain Fiocruz L1-130).